The primary structure comprises 171 residues: 3-hydroxydecanoyl-[acyl-carrier-protein] dehydratase (171 aa).

Histidine 70 is an active-site residue.

Belongs to the thioester dehydratase family. FabA subfamily. Homodimer.

The protein localises to the cytoplasm. The enzyme catalyses a (3R)-hydroxyacyl-[ACP] = a (2E)-enoyl-[ACP] + H2O. It carries out the reaction (3R)-hydroxydecanoyl-[ACP] = (2E)-decenoyl-[ACP] + H2O. The catalysed reaction is (2E)-decenoyl-[ACP] = (3Z)-decenoyl-[ACP]. It functions in the pathway lipid metabolism; fatty acid biosynthesis. Functionally, necessary for the introduction of cis unsaturation into fatty acids. Catalyzes the dehydration of (3R)-3-hydroxydecanoyl-ACP to E-(2)-decenoyl-ACP and then its isomerization to Z-(3)-decenoyl-ACP. Can catalyze the dehydratase reaction for beta-hydroxyacyl-ACPs with saturated chain lengths up to 16:0, being most active on intermediate chain length. The polypeptide is 3-hydroxydecanoyl-[acyl-carrier-protein] dehydratase (Shewanella halifaxensis (strain HAW-EB4)).